The sequence spans 713 residues: Glutamine--fructose-6-phosphate aminotransferase [isomerizing] (713 aa).

Cys-2 serves as the catalytic For GATase activity. Residues 2–316 (CGIFGYVNFL…DDDIAHIYDG (315 aa)) form the Glutamine amidotransferase type-2 domain. 2 SIS domains span residues 389-528 (WLST…DSIS) and 561-703 (CNSS…VDFP).

In terms of assembly, homotetramer.

The catalysed reaction is D-fructose 6-phosphate + L-glutamine = D-glucosamine 6-phosphate + L-glutamate. The protein operates within nucleotide-sugar biosynthesis; UDP-N-acetyl-alpha-D-glucosamine biosynthesis; alpha-D-glucosamine 6-phosphate from D-fructose 6-phosphate: step 1/1. Involved in amino sugar synthesis (formation of chitin, supplies the amino sugars of asparagine-linked oligosaccharides of glycoproteins). The protein is Glutamine--fructose-6-phosphate aminotransferase [isomerizing] (GFA1) of Candida albicans (strain SC5314 / ATCC MYA-2876) (Yeast).